The following is a 366-amino-acid chain: Ferredoxin--NADP reductase (366 aa).

FAD is bound by residues D51, Q59, Y64, V104, F139, D308, and T349.

It belongs to the ferredoxin--NADP reductase type 2 family. Homodimer. FAD is required as a cofactor.

It carries out the reaction 2 reduced [2Fe-2S]-[ferredoxin] + NADP(+) + H(+) = 2 oxidized [2Fe-2S]-[ferredoxin] + NADPH. The sequence is that of Ferredoxin--NADP reductase from Polaromonas naphthalenivorans (strain CJ2).